The primary structure comprises 62 residues: Small ribosomal subunit protein eS17 (62 aa).

It belongs to the eukaryotic ribosomal protein eS17 family.

This Methanocaldococcus jannaschii (strain ATCC 43067 / DSM 2661 / JAL-1 / JCM 10045 / NBRC 100440) (Methanococcus jannaschii) protein is Small ribosomal subunit protein eS17.